Reading from the N-terminus, the 273-residue chain is HMP-PP phosphatase (273 aa).

The active-site Nucleophile is the Asp-8. The Mg(2+) site is built by Asp-8, Asp-10, and Asp-212.

The protein belongs to the HAD-like hydrolase superfamily. Cof family. Mg(2+) is required as a cofactor.

It catalyses the reaction 4-amino-2-methyl-5-(diphosphooxymethyl)pyrimidine + H2O = 4-amino-2-methyl-5-(phosphooxymethyl)pyrimidine + phosphate + H(+). In terms of biological role, catalyzes the hydrolysis of 4-amino-2-methyl-5-hydroxymethylpyrimidine pyrophosphate (HMP-PP) to 4-amino-2-methyl-5-hydroxymethylpyrimidine phosphate (HMP-P). The protein is HMP-PP phosphatase of Yersinia pseudotuberculosis serotype O:1b (strain IP 31758).